The chain runs to 632 residues: Basic helix-loop-helix ARNT-like protein 1 (632 aa).

A disordered region spans residues 1–39 (MADQRMDISSTISDFMSPGPTDLLSGSLGTSGVDCNRKR). S17 is modified (phosphoserine; by GSK3-beta). A Phosphothreonine; by GSK3-beta modification is found at T21. Residues 36–41 (NRKRKG) carry the Nuclear localization signal motif. The region spanning 79 to 132 (NAREAHSQIEKRRRDKMNSFIDELASLVPTCNAMSRKLDKLTVLRMAVQHMKTL) is the bHLH domain. Position 85 is a phosphoserine (S85). S97 is subject to Phosphoserine; by CK2. Residues 149–159 (LSDDELKHLIL) carry the Nuclear export signal 1 motif. One can recognise a PAS 1 domain in the interval 150-222 (SDDELKHLIL…EQLSSSDTAP (73 aa)). Residue K259 forms a Glycyl lysine isopeptide (Lys-Gly) (interchain with G-Cter in SUMO2 and SUMO3) linkage. K266 is covalently cross-linked (Glycyl lysine isopeptide (Lys-Gly) (interchain with G-Cter in SUMO); alternate). K266 is covalently cross-linked (Glycyl lysine isopeptide (Lys-Gly) (interchain with G-Cter in SUMO2); alternate). The region spanning 333–403 (QPANGEIRVK…CHRQVLQTRE (71 aa)) is the PAS 2 domain. The short motif at 367–375 (LAYLPQELL) is the Nuclear export signal 2 element. One can recognise a PAC domain in the interval 408 to 451 (NCYKFKIKDGSFITLRSRWFSFMNPWTKEVEYIVSTNTVVLANV). Disordered regions lie at residues 465–498 (PPHSMDSMLPSGEGGPKRTHPTVPGIPGGTRAGA) and 517–601 (GSSP…SPSN). Residues 514–594 (RIRGSSPSSC…IGIDMIDNDQ (81 aa)) form an interaction with CIART region. Residues 517–527 (GSSPSSCGSSP) show a composition bias toward low complexity. K544 is modified (N6-acetyllysine).

Component of the circadian clock oscillator which includes the CRY1/2 proteins, CLOCK or NPAS2, BMAL1 or BMAL2, CSNK1D and/or CSNK1E, TIMELESS and the PER1/2/3 proteins. Forms a heterodimer with CLOCK. The CLOCK-BMAL1 heterodimer is required for E-box-dependent transactivation, for CLOCK nuclear translocation and degradation, and, for phosphorylation of both CLOCK and BMAL1. Part of a nuclear complex which also includes RACK1 and PRKCA; RACK1 and PRKCA are recruited to the complex in a circadian manner. Interacts with NPAS2. Interacts with EZH2. Interacts with SUMO3. Interacts with SIRT1. Interacts with AHR. Interacts with ID1, ID2 and ID3. Interacts with DDX4. Interacts with OGT. Interacts with EED and SUZ12. Interacts with MTA1. Interacts with CIART. Interacts with HSP90. Interacts with KAT2B and EP300. Interacts with BHLHE40/DEC1 and BHLHE41/DEC2. Interacts with RELB and the interaction is enhanced in the presence of CLOCK. Interacts with PER1, PER2, CRY1 and CRY2 and this interaction requires a translocation to the nucleus. Interaction of the CLOCK-BMAL1 heterodimer with PER or CRY inhibits transcription activation. Interaction of the CLOCK-BMAL1 with CRY1 is independent of DNA but with PER2 is off DNA. The CLOCK-BMAL1 heterodimer interacts with GSK3B. Interacts with KDM5A. Interacts with KMT2A; in a circadian manner. Interacts with UBE3A. Interacts with PRKCG. Interacts with MAGEL2. Interacts with NCOA2. Interacts with THRAP3. The CLOCK-BMAL1 heterodimer interacts with PASD1. Interacts with PASD1. Interacts with USP9X. Interacts with PIWIL2 (via PIWI domain). Interacts with HDAC3. Interacts with HNF4A. Ubiquitinated, leading to its proteasomal degradation. Deubiquitinated by USP9X. Post-translationally, O-glycosylated; contains O-GlcNAc. O-glycosylation by OGT prevents protein degradation by inhibiting ubiquitination. It also stabilizes the CLOCK-BMAL1 heterodimer thereby increasing CLOCK-BMAL1-mediated transcription of genes in the negative loop of the circadian clock such as PER1/2/3 and CRY1/2. In terms of processing, acetylated on Lys-544 by CLOCK during the repression phase of the circadian cycle. Acetylation facilitates recruitment of CRY1 protein and initiates the repression phase of the circadian cycle. Acetylated at Lys-544 by KAT5 during the activation phase of the cycle, leading to recruitment of the positive transcription elongation factor b (P-TEFb) and BRD4, followed by productive elongation of circadian transcripts. Deacetylated by SIRT1, which may result in decreased protein stability. Phosphorylated upon dimerization with CLOCK. Phosphorylation enhances the transcriptional activity, alters the subcellular localization and decreases the stability of the CLOCK-BMAL1 heterodimer by promoting its degradation. Phosphorylation shows circadian variations in the liver with a peak between CT10 to CT14. Phosphorylation at Ser-97 by CK2 is essential for its nuclear localization, its interaction with CLOCK and controls CLOCK nuclear entry. Dephosphorylation at Ser-85 is important for dimerization with CLOCK and transcriptional activity. Post-translationally, sumoylated on Lys-266 upon dimerization with CLOCK. Predominantly conjugated to poly-SUMO2/3 rather than SUMO1 and the level of these conjugates undergo rhythmic variation, peaking at CT9-CT12. Sumoylation localizes it exclusively to the PML body and promotes its ubiquitination in the PML body, ubiquitin-dependent proteasomal degradation and the transcriptional activity of the CLOCK-BMAL1 heterodimer. In terms of processing, undergoes lysosome-mediated degradation in a time-dependent manner in the liver. As to expression, expressed in liver and testis (at protein level). Expressed in the suprachiasmatic nucleus (SCN) in a circadian manner.

The protein resides in the nucleus. It localises to the cytoplasm. The protein localises to the PML body. The redox state of the cell can modulate the transcriptional activity of the CLOCK-BMAL1 and NPAS2-BMAL1 heterodimers; NADH and NADPH enhance the DNA-binding activity of the heterodimers. Its function is as follows. Transcriptional activator which forms a core component of the circadian clock. The circadian clock, an internal time-keeping system, regulates various physiological processes through the generation of approximately 24 hour circadian rhythms in gene expression, which are translated into rhythms in metabolism and behavior. It is derived from the Latin roots 'circa' (about) and 'diem' (day) and acts as an important regulator of a wide array of physiological functions including metabolism, sleep, body temperature, blood pressure, endocrine, immune, cardiovascular, and renal function. Consists of two major components: the central clock, residing in the suprachiasmatic nucleus (SCN) of the brain, and the peripheral clocks that are present in nearly every tissue and organ system. Both the central and peripheral clocks can be reset by environmental cues, also known as Zeitgebers (German for 'timegivers'). The predominant Zeitgeber for the central clock is light, which is sensed by retina and signals directly to the SCN. The central clock entrains the peripheral clocks through neuronal and hormonal signals, body temperature and feeding-related cues, aligning all clocks with the external light/dark cycle. Circadian rhythms allow an organism to achieve temporal homeostasis with its environment at the molecular level by regulating gene expression to create a peak of protein expression once every 24 hours to control when a particular physiological process is most active with respect to the solar day. Transcription and translation of core clock components (CLOCK, NPAS2, BMAL1, BMAL2, PER1, PER2, PER3, CRY1 and CRY2) plays a critical role in rhythm generation, whereas delays imposed by post-translational modifications (PTMs) are important for determining the period (tau) of the rhythms (tau refers to the period of a rhythm and is the length, in time, of one complete cycle). A diurnal rhythm is synchronized with the day/night cycle, while the ultradian and infradian rhythms have a period shorter and longer than 24 hours, respectively. Disruptions in the circadian rhythms contribute to the pathology of cardiovascular diseases, cancer, metabolic syndromes and aging. A transcription/translation feedback loop (TTFL) forms the core of the molecular circadian clock mechanism. Transcription factors, CLOCK or NPAS2 and BMAL1 or BMAL2, form the positive limb of the feedback loop, act in the form of a heterodimer and activate the transcription of core clock genes and clock-controlled genes (involved in key metabolic processes), harboring E-box elements (5'-CACGTG-3') within their promoters. The core clock genes: PER1/2/3 and CRY1/2 which are transcriptional repressors form the negative limb of the feedback loop and interact with the CLOCK|NPAS2-BMAL1|BMAL2 heterodimer inhibiting its activity and thereby negatively regulating their own expression. This heterodimer also activates nuclear receptors NR1D1/2 and RORA/B/G, which form a second feedback loop and which activate and repress BMAL1 transcription, respectively. BMAL1 positively regulates myogenesis and negatively regulates adipogenesis via the transcriptional control of the genes of the canonical Wnt signaling pathway. Plays a role in normal pancreatic beta-cell function; regulates glucose-stimulated insulin secretion via the regulation of antioxidant genes NFE2L2/NRF2 and its targets SESN2, PRDX3, CCLC and CCLM. Negatively regulates the mTORC1 signaling pathway; regulates the expression of MTOR and DEPTOR. Controls diurnal oscillations of Ly6C inflammatory monocytes; rhythmic recruitment of the PRC2 complex imparts diurnal variation to chemokine expression that is necessary to sustain Ly6C monocyte rhythms. Regulates the expression of HSD3B2, STAR, PTGS2, CYP11A1, CYP19A1 and LHCGR in the ovary and also the genes involved in hair growth. Plays an important role in adult hippocampal neurogenesis by regulating the timely entry of neural stem/progenitor cells (NSPCs) into the cell cycle and the number of cell divisions that take place prior to cell-cycle exit. Regulates the circadian expression of CIART and KLF11. The CLOCK-BMAL1 heterodimer regulates the circadian expression of SERPINE1/PAI1, VWF, B3, CCRN4L/NOC, NAMPT, DBP, MYOD1, PPARGC1A, PPARGC1B, SIRT1, GYS2, F7, NGFR, GNRHR, BHLHE40/DEC1, ATF4, MTA1, KLF10 and also genes implicated in glucose and lipid metabolism. Promotes rhythmic chromatin opening, regulating the DNA accessibility of other transcription factors. May play a role in spermatogenesis; contributes to the chromatoid body assembly and physiology. The NPAS2-BMAL1 heterodimer positively regulates the expression of MAOA, F7 and LDHA and modulates the circadian rhythm of daytime contrast sensitivity by regulating the rhythmic expression of adenylate cyclase type 1 (ADCY1) in the retina. The preferred binding motif for the CLOCK-BMAL1 heterodimer is 5'-CACGTGA-3', which contains a flanking adenine nucleotide at the 3-prime end of the canonical 6-nucleotide E-box sequence. CLOCK specifically binds to the half-site 5'-CAC-3', while BMAL1 binds to the half-site 5'-GTGA-3'. The CLOCK-BMAL1 heterodimer also recognizes the non-canonical E-box motifs 5'-AACGTGA-3' and 5'-CATGTGA-3'. Essential for the rhythmic interaction of CLOCK with ASS1 and plays a critical role in positively regulating CLOCK-mediated acetylation of ASS1. Plays a role in protecting against lethal sepsis by limiting the expression of immune checkpoint protein CD274 in macrophages in a PKM2-dependent manner. Regulates the diurnal rhythms of skeletal muscle metabolism via transcriptional activation of genes promoting triglyceride synthesis (DGAT2) and metabolic efficiency (COQ10B). This Mus musculus (Mouse) protein is Basic helix-loop-helix ARNT-like protein 1 (Bmal1).